A 480-amino-acid chain; its full sequence is uncharacterized protein (480 aa).

The first 21 residues, 1-21 (MSRYFSFFFLALFLHYRIIVA), serve as a signal peptide directing secretion. Disordered regions lie at residues 38–72 (SSHLLHHSLPPPLLTQSHSSLSDPDPEPEPSSAEC) and 116–147 (SPLITENGTHADPKTPDLKTSSEAQGDTNDQT). The segment covering 51 to 60 (LTQSHSSLSD) has biased composition (low complexity). Residues 133-144 (LKTSSEAQGDTN) are compositionally biased toward polar residues. A helical transmembrane segment spans residues 153–173 (YAVEIACVCFLIALAINYFVG). A disordered region spans residues 404–480 (QARNKTESGR…VPKMKMSRSH (77 aa)). The segment covering 407–465 (NKTESGRQKAAEEAYKELHNARQEALQKKKAEKKKMMEEAEAKMSAEVIRKKEAKERAR) has biased composition (basic and acidic residues). Positions 411–467 (SGRQKAAEEAYKELHNARQEALQKKKAEKKKMMEEAEAKMSAEVIRKKEAKERARQV) form a coiled coil. A compositionally biased stretch (basic residues) spans 466–480 (QVKKAVPKMKMSRSH).

The protein localises to the membrane. This is an uncharacterized protein from Arabidopsis thaliana (Mouse-ear cress).